A 305-amino-acid chain; its full sequence is Glycine--tRNA ligase alpha subunit (305 aa).

This sequence belongs to the class-II aminoacyl-tRNA synthetase family. In terms of assembly, tetramer of two alpha and two beta subunits.

It is found in the cytoplasm. It carries out the reaction tRNA(Gly) + glycine + ATP = glycyl-tRNA(Gly) + AMP + diphosphate. The sequence is that of Glycine--tRNA ligase alpha subunit from Streptococcus pneumoniae serotype 19F (strain G54).